Here is a 933-residue protein sequence, read N- to C-terminus: Serine/threonine-protein kinase PknD (933 aa).

The Protein kinase domain occupies 4–291 (YDIIRMIGKG…ALKADIEQHL (288 aa)). Residues 10–18 (IGKGGMGEV) and lysine 33 contribute to the ATP site. The active-site Proton acceptor is the aspartate 138.

The protein belongs to the protein kinase superfamily. Ser/Thr protein kinase family. Post-translationally, autophosphorylated on serine and threonine residues.

The enzyme catalyses L-seryl-[protein] + ATP = O-phospho-L-seryl-[protein] + ADP + H(+). It carries out the reaction L-threonyl-[protein] + ATP = O-phospho-L-threonyl-[protein] + ADP + H(+). Functionally, together with the serine/threonine kinase Pkn1, may play a role in the specific interactions with host proteins during intracellular growth. The polypeptide is Serine/threonine-protein kinase PknD (Chlamydia abortus (strain DSM 27085 / S26/3) (Chlamydophila abortus)).